The sequence spans 549 residues: Cation/acetate symporter ActP (549 aa).

Helical transmembrane passes span 33–53 (WQAIIMFLIFVVFTLGITYWA), 77–97 (LAIAGDYMSAASFLGISALVF), 103–123 (GLIYSLGFLVGWPIILFLIAE), 148–168 (ILSACGSLVVVALYLIAQMVG), 183–203 (IAVVLVGVLMMMYVLFGGMLA), 206–226 (WVQIIKAVLLLFGASFMAFMV), 262–282 (ISALSLGLGLMFGTAGLPHIL), 303–323 (GFMGYFYILTFIIGFGAIMLV), 355–375 (LFLGFISAVAFATILAVVAGL), 404–424 (VSKITVLVLGVIAIILGVLFE), 428–448 (IAFMVGLAFAIAASCNFPIIL), 464–484 (GGWLGLLTAVVLMILGPTIWV), and 493–513 (IFPYEYPALFSISVAFLGIWF).

Belongs to the sodium:solute symporter (SSF) (TC 2.A.21) family.

The protein resides in the cell inner membrane. In terms of biological role, transports acetate. The protein is Cation/acetate symporter ActP of Salmonella arizonae (strain ATCC BAA-731 / CDC346-86 / RSK2980).